The primary structure comprises 651 residues: LEAF RUST 10 DISEASE-RESISTANCE LOCUS RECEPTOR-LIKE PROTEIN KINASE-like 1.2 (651 aa).

A signal peptide spans 1 to 26; it reads MNPSTPSLLYTSIFFYFTIIATQTLS. Residues 27–264 lie on the Extracellular side of the membrane; sequence LDPKFKACEP…NDKRRRVIVK (238 aa). Asparagine 88, asparagine 114, asparagine 130, asparagine 136, asparagine 155, asparagine 193, and asparagine 213 each carry an N-linked (GlcNAc...) asparagine glycan. The helical transmembrane segment at 265–285 threads the bilayer; sequence VLIGASAAVVGLIAASIFWYV. At 286–651 the chain is on the cytoplasmic side; sequence YHRRKTKSYR…DSVIVKWDSK (366 aa). One can recognise a Protein kinase domain in the interval 341–613; the sequence is FDPSKELGDG…PCMSHVQDTL (273 aa). ATP contacts are provided by residues 347–355 and lysine 369; that span reads LGDGGFGTV. Tyrosine 415 is modified (phosphotyrosine). Aspartate 465 serves as the catalytic Proton acceptor. Position 498 is a phosphoserine (serine 498). Threonine 499 and threonine 504 each carry phosphothreonine. Position 512 is a phosphotyrosine (tyrosine 512).

This sequence belongs to the protein kinase superfamily. Ser/Thr protein kinase family.

It is found in the cell membrane. Its subcellular location is the membrane. It catalyses the reaction L-seryl-[protein] + ATP = O-phospho-L-seryl-[protein] + ADP + H(+). The enzyme catalyses L-threonyl-[protein] + ATP = O-phospho-L-threonyl-[protein] + ADP + H(+). Probable receptor-like serine/threonine-protein kinase involved in abscisic acid (ABA) signaling. Acts as a positive regulator of abiotic stress response. This is LEAF RUST 10 DISEASE-RESISTANCE LOCUS RECEPTOR-LIKE PROTEIN KINASE-like 1.2 from Arabidopsis thaliana (Mouse-ear cress).